The primary structure comprises 964 residues: uncharacterized protein (964 aa).

Residues 97–117 (DSESDVGSDAESDAESDAESD) are compositionally biased toward acidic residues. The segment at 97 to 208 (DSESDVGSDA…SNSIDNESES (112 aa)) is disordered. The span at 121-148 (HTQNNTNTPINNITLINLDSSNNSTQSD) shows a compositional bias: low complexity. Positions 149 to 163 (NESDNESDNESDNES) are enriched in acidic residues. Residues 192–203 (NSDNIGNSNSID) are compositionally biased toward low complexity.

This is an uncharacterized protein from Acanthamoeba polyphaga (Amoeba).